Consider the following 313-residue polypeptide: Expansin-like A4 (313 aa).

An N-terminal signal peptide occupies residues M1–A30. Residues G59–S173 enclose the Expansin-like EG45 domain. N-linked (GlcNAc...) asparagine glycosylation occurs at N124. The Expansin-like CBD domain occupies T188–T281.

Belongs to the expansin family. Expansin-like A subfamily.

Its subcellular location is the secreted. The chain is Expansin-like A4 (EXLA4) from Oryza sativa subsp. japonica (Rice).